The following is a 289-amino-acid chain: O-methyltransferase asqN (289 aa).

An S-adenosyl-L-methionine-binding site is contributed by Asp155. His195 serves as the catalytic Proton acceptor.

The protein belongs to the class I-like SAM-binding methyltransferase superfamily. Cation-independent O-methyltransferase family.

The protein operates within secondary metabolite biosynthesis. It functions in the pathway alkaloid biosynthesis. Its pathway is mycotoxin biosynthesis. Functionally, O-methyltransferase; part of the gene cluster that mediates the biosynthesis of the aspoquinolone mycotoxins. The role of asqN within the aspoquinolone pathway has still to be determined. The first step of the pathway is catalyzed by the nonribosomal peptide synthetase asqK that condenses anthranilic acid and O-methyl-L-tyrosine to produce 4'-methoxycyclopeptin. 4'-methoxycyclopeptin is then converted to 4'-methoxydehydrocyclopeptin by the ketoglutarate-dependent dioxygenase asqJ. AsqJ also converts its first product 4'-methoxydehydrocyclopeptin to 4'-methoxycyclopenin. The following conversion of 4'-methoxycyclopenin into 4'-methoxyviridicatin is catalyzed by the cyclopenase asqI. 4'-methoxyviridicatin is the precursor of quinolone natural products, and is further converted to quinolinone B. The prenyltransferase asqH1 then catalyzes the canonical Friedel-Crafts alkylation of quinolinone B with dimethylallyl cation to yield dimethylallyl quinolone, which is subjected to FAD-dependent dehydrogenation by the FAD-linked oxidoreductase asqF to yield conjugated aryl diene. The delta(3') double bond then serves as the site of the second alkylation with DMAPP catalyzed by the prenyltransferase asqH2 to yield a carbenium ion intermediate, which can be attacked by H(2)O to yield a styrenyl quinolone containing a C3'-hydroxyprenyl chain. The FAD-dependent monooxygenase asqG performs epoxidation of the terminal C7'-C8' olefin. Finally, after dehydratation of the epoxide at C3 by asqC, the quinolone epoxide rearrangement protein asqO catalyzes an enzymatic 3-exo-tet cyclization to yield the cyclopropyl-THF ring system in aspoquinolone. The chain is O-methyltransferase asqN from Emericella nidulans (strain FGSC A4 / ATCC 38163 / CBS 112.46 / NRRL 194 / M139) (Aspergillus nidulans).